The following is a 327-amino-acid chain: DNA primase large subunit PriL (327 aa).

[4Fe-4S] cluster contacts are provided by C218, C290, C299, and C307.

This sequence belongs to the eukaryotic-type primase large subunit family. Heterodimer of a small subunit (PriS) and a large subunit (PriL). Requires [4Fe-4S] cluster as cofactor.

In terms of biological role, regulatory subunit of DNA primase, an RNA polymerase that catalyzes the synthesis of short RNA molecules used as primers for DNA polymerase during DNA replication. Stabilizes and modulates the activity of the small subunit, increasing the rate of DNA synthesis, and conferring RNA synthesis capability. The DNA polymerase activity may enable DNA primase to also catalyze primer extension after primer synthesis. May also play a role in DNA repair. This chain is DNA primase large subunit PriL, found in Thermoplasma volcanium (strain ATCC 51530 / DSM 4299 / JCM 9571 / NBRC 15438 / GSS1).